A 227-amino-acid polypeptide reads, in one-letter code: Adenylate kinase (227 aa).

21–26 serves as a coordination point for ATP; that stretch reads GAGKGT. The NMP stretch occupies residues 41–70; that stretch reads ATGDMLRSQVAKQTPLGIEAKKIMDDGKLV. AMP contacts are provided by residues threonine 42, arginine 47, 68-70, 97-100, and glutamine 104; these read KLV and GFPR. Positions 138-175 are LID; it reads GRLVHPASGRSYHKVFNPPKTEMKDDITGEDLVQRSDD. Residues arginine 139 and 148–149 contribute to the ATP site; that span reads SY. AMP contacts are provided by arginine 172 and arginine 183. Glutamine 211 lines the ATP pocket.

The protein belongs to the adenylate kinase family. AK2 subfamily. Monomer.

It is found in the cytoplasm. It localises to the cytosol. The protein localises to the mitochondrion intermembrane space. It catalyses the reaction AMP + ATP = 2 ADP. Its function is as follows. Catalyzes the reversible transfer of the terminal phosphate group between ATP and AMP. Plays an important role in cellular energy homeostasis and in adenine nucleotide metabolism. Adenylate kinase activity is critical for regulation of the phosphate utilization and the AMP de novo biosynthesis pathways. This chain is Adenylate kinase, found in Kluyveromyces lactis (strain ATCC 8585 / CBS 2359 / DSM 70799 / NBRC 1267 / NRRL Y-1140 / WM37) (Yeast).